The primary structure comprises 534 residues: Ankyrin repeat domain-containing protein 34C (534 aa).

ANK repeat units follow at residues 10–39 (TDGN…YINE), 43–80 (KGET…DPNI), 84–114 (SGKT…DPSL), and 118–147 (TGAS…AKGK). The interval 159–205 (SGTKTTKQYLNVPPSPKVEDRQSPPLCTTPSDVELKTSGLASPPSEK) is disordered. Position 301 is a phosphoserine (S301). 2 disordered regions span residues 332–368 (YEKG…LKDP) and 384–403 (QPVG…GPLD). The residue at position 446 (S446) is a Phosphoserine. A disordered region spans residues 480-503 (SKPASPLASGLKSMAPVAPNSPKR).

The protein belongs to the ANKRD34 family.

The protein is Ankyrin repeat domain-containing protein 34C (Ankrd34c) of Mus musculus (Mouse).